We begin with the raw amino-acid sequence, 200 residues long: MERTEVLKPRTLADLIRVLHQLFAGEEINVEEVQAVMEAYESNPAEWAVYAKFDQYRYTRNLVDQGNGKFNLMILCWGEGHGSSIHDHTDSHCFLKMLQGNLKETLFAWPDKKSNEMIKKSERILRENQCAYINDSIGLHRVENISHTEPAVSLHLYSPPFDTCHAFDQRTGHKNKVIMTFHSKFGIKTPFTTSGSLENN.

Fe cation is bound by residues histidine 86, histidine 88, and histidine 140. Residues 93-157 constitute a cross-link (3'-(S-cysteinyl)-tyrosine (Cys-Tyr)); that stretch reads CFLKMLQGNL…TEPAVSLHLY (65 aa).

It belongs to the cysteine dioxygenase family. In terms of assembly, monomer. It depends on Fe cation as a cofactor. The cofactor is Ni(2+). Zn(2+) is required as a cofactor. The thioether cross-link between Cys-93 and Tyr-157 plays a structural role through stabilizing the Fe(2+) ion, and prevents the production of highly damaging free hydroxyl radicals by holding the oxygen radical via hydroxyl hydrogen.

The enzyme catalyses L-cysteine + O2 = 3-sulfino-L-alanine + H(+). It participates in organosulfur biosynthesis; taurine biosynthesis; hypotaurine from L-cysteine: step 1/2. Catalyzes the oxidation of cysteine to cysteine sulfinic acid with addition of molecular dioxygen. The polypeptide is Cysteine dioxygenase type 1 (CDO1) (Bos taurus (Bovine)).